The following is a 329-amino-acid chain: ADP-L-glycero-D-manno-heptose-6-epimerase (329 aa).

NADP(+) is bound by residues 10–11 (FI), 31–32 (DD), Lys38, Lys53, 74–78 (QGACS), and Asn91. Tyr138 serves as the catalytic Proton acceptor. Position 142 (Lys142) interacts with NADP(+). A substrate-binding site is contributed by Asn167. 2 residues coordinate NADP(+): Val168 and Lys176. Lys176 functions as the Proton acceptor in the catalytic mechanism. Substrate-binding positions include Arg178, His185, 199-202 (FAGW), Arg212, and Tyr291.

The protein belongs to the NAD(P)-dependent epimerase/dehydratase family. HldD subfamily. As to quaternary structure, homopentamer. The cofactor is NADP(+).

The enzyme catalyses ADP-D-glycero-beta-D-manno-heptose = ADP-L-glycero-beta-D-manno-heptose. Its pathway is nucleotide-sugar biosynthesis; ADP-L-glycero-beta-D-manno-heptose biosynthesis; ADP-L-glycero-beta-D-manno-heptose from D-glycero-beta-D-manno-heptose 7-phosphate: step 4/4. It participates in bacterial outer membrane biogenesis; LPS core biosynthesis. Its function is as follows. Catalyzes the interconversion between ADP-D-glycero-beta-D-manno-heptose and ADP-L-glycero-beta-D-manno-heptose via an epimerization at carbon 6 of the heptose. In Bordetella pertussis (strain Tohama I / ATCC BAA-589 / NCTC 13251), this protein is ADP-L-glycero-D-manno-heptose-6-epimerase.